The primary structure comprises 636 residues: MEKAVNDGSHSEELFCHLKTISEKEDLPRCTSESHLSCLKQDILNEKTELEATLKEAELVTHSVELLLPLFKDTIEKINFENANLSALNLKISEQKEILIKELDTFKSVKLALEHLLRKRDYKQTGDNLSSMLLENLTDNESENTNLKKKVFEKEAHIQELSCLFQSEKANTLKANRFSQSVKVVHERLQIQIHKREAENDKLKEYVKSLETKIAKWNLQSRMNKNEAIVMKEASRQKTVALKKASKVYKQRLDHFTGAIEKLTSQIRDQEAKLSETISASNAWKSHYEKIVIEKTELEVQIETMKKQIINLLEDLKKMEDHGKNSCEEILRKVHSIEYENETLNLENTKLKLRFPCRITESKNMNILIVLDMLCYISSEKTTLAALKDEVVSVENELSELQEVEKKQKTLIEMYKTQVQKLQEAAEIVKSRCENLLHKNNQITKTKNKNVEKMRGQMESHLKELERVCDSLTAAERRLHECQESLQCCKGKCADQEHTIRELQGQVDGNHNLLTKLSLEEENCLIQLKCENLQQKLEQMDAENKELEKKLANQEECLKHSNLKFKEKSAEYTALARQLEAALEEGRQKVAEEIEKMSSRESALQIKILDLETELRKKNEEQNQLVCKMNSDPETP.

Coiled coils occupy residues 36–97, 141–220, 249–325, 377–484, and 519–631; these read LSCL…EQKE, ESEN…WNLQ, YKQR…HGKN, ISSE…ECQE, and LEEE…KMNS.

Belongs to the ODF2 family. In terms of tissue distribution, mainly expressed in trachea and testis. Not detected in bone marrow, bladder, leukocytes. Only weakly detected in tongue, stomach, brain and ovaries.

Its subcellular location is the cytoplasm. The protein resides in the cytoskeleton. The protein localises to the microtubule organizing center. It localises to the centrosome. It is found in the centriole. Its subcellular location is the centriolar satellite. The protein resides in the cilium basal body. In terms of biological role, acts as a suppressor of ciliogenesis, specifically, the initiation of ciliogenesis. The sequence is that of Protein BCAP from Homo sapiens (Human).